The primary structure comprises 280 residues: Lysosome-associated membrane glycoprotein 5 (280 aa).

The signal sequence occupies residues 1–29; sequence MDLRRRALLGVDGLRVLLMLFHTVTRIMA. At 30–235 the chain is on the extracellular side; the sequence is EQEVENLSGL…PVDEREQLEE (206 aa). N-linked (GlcNAc...) asparagine glycosylation is found at Asn35 and Asn53. A helical membrane pass occupies residues 236 to 256; it reads TLPLILGLILGLVIVVTLVIY. At 257–280 the chain is on the cytoplasmic side; the sequence is HIHHKMTANQVQIPRDRSQYKHMG.

Belongs to the LAMP family. In terms of processing, glycosylated.

It localises to the cytoplasmic vesicle membrane. Its subcellular location is the cell membrane. It is found in the cell projection. The protein localises to the dendrite. The protein resides in the cytoplasmic vesicle. It localises to the secretory vesicle. Its subcellular location is the synaptic vesicle membrane. It is found in the growth cone membrane. The protein localises to the early endosome membrane. The protein resides in the recycling endosome. It localises to the endoplasmic reticulum-Golgi intermediate compartment membrane. Its subcellular location is the endosome membrane. Plays a role in short-term synaptic plasticity in a subset of GABAergic neurons in the brain. The sequence is that of Lysosome-associated membrane glycoprotein 5 (LAMP5) from Bos taurus (Bovine).